Here is a 301-residue protein sequence, read N- to C-terminus: ATP synthase F(0) complex subunit B1, mitochondrial (301 aa).

The N-terminal 21 residues, 1 to 21 (MSLSRLSSPQTFSRVFIVARG), are a transit peptide targeting the mitochondrion.

The protein belongs to the eukaryotic ATPase B chain family. Subunit of the F-type ATPase which has 2 components, CF(1) - the catalytic core - and CF(0) - the membrane proton channel.

It localises to the mitochondrion. It is found in the mitochondrion inner membrane. Mitochondrial membrane ATP synthase (F(1)F(0) ATP synthase or Complex V) produces ATP from ADP in the presence of a proton gradient across the membrane which is generated by electron transport complexes of the respiratory chain. F-type ATPases consist of two structural domains, F(1) - containing the extramembraneous catalytic core, and F(0) - containing the membrane proton channel, linked together by a central stalk and a peripheral stalk. During catalysis, ATP synthesis in the catalytic domain of F(1) is coupled via a rotary mechanism of the central stalk subunits to proton translocation. Part of the complex F(0) domain and the peripheric stalk, which acts as a stator to hold the subunits of the catalytic subcomplexes relative to the rotary elements. Plays a role in germline development. The sequence is that of ATP synthase F(0) complex subunit B1, mitochondrial from Caenorhabditis elegans.